Consider the following 233-residue polypeptide: Small ribosomal subunit protein uS3 (233 aa).

Residues 39–107 (VRKYLTKELE…PAQINIAEVR (69 aa)) enclose the KH type-2 domain.

The protein belongs to the universal ribosomal protein uS3 family. In terms of assembly, part of the 30S ribosomal subunit. Forms a tight complex with proteins S10 and S14.

Binds the lower part of the 30S subunit head. Binds mRNA in the 70S ribosome, positioning it for translation. The chain is Small ribosomal subunit protein uS3 from Pectobacterium carotovorum subsp. carotovorum (strain PC1).